A 288-amino-acid chain; its full sequence is Small ribosomal subunit protein uS2 (288 aa).

The span at 259–276 shows a compositional bias: low complexity; that stretch reads EAAPAAEEAPAAEAEAAA. The disordered stretch occupies residues 259-288; the sequence is EAAPAAEEAPAAEAEAAATDTSSESDKTEA.

The protein belongs to the universal ribosomal protein uS2 family.

This is Small ribosomal subunit protein uS2 from Maricaulis maris (strain MCS10) (Caulobacter maris).